The following is a 196-amino-acid chain: Large ribosomal subunit protein bL25 (196 aa).

The protein belongs to the bacterial ribosomal protein bL25 family. CTC subfamily. As to quaternary structure, part of the 50S ribosomal subunit; part of the 5S rRNA/L5/L18/L25 subcomplex. Contacts the 5S rRNA. Binds to the 5S rRNA independently of L5 and L18.

Its function is as follows. This is one of the proteins that binds to the 5S RNA in the ribosome where it forms part of the central protuberance. This chain is Large ribosomal subunit protein bL25, found in Geotalea daltonii (strain DSM 22248 / JCM 15807 / FRC-32) (Geobacter daltonii).